A 513-amino-acid chain; its full sequence is Acyltransferase uat1 (513 aa).

The active-site Proton acceptor is histidine 158.

It belongs to the plant acyltransferase family.

It functions in the pathway secondary metabolite biosynthesis. In terms of biological role, acyltransferase; part of the gene cluster that mediates the biosynthesis of the glycolipid biosurfactant ustilagic acid (UA). UA is a secreted cellobiose glycolipid that is toxic for many microorganisms and confers biocontrol activity to U.maydis. UA consists of 15,16-dihydroxypalmitic or 2,15,16-trihydroxypalmitic acid, which is O-glycosidically linked to cellobiose at its terminal hydroxyl group. In addition, the cellobiose moiety is acetylated and acylated with a short-chain hydroxy fatty acid. UA biosynthesis starts with omega-hydroxylation of palmitic acid catalyzed by the cytochrome P450 monooxygenase cyp1. Terminal hydroxylation of palmitic acid precedes subterminal hydroxylation catalyzed by the cytochrome P450 monooxygenase cyp2. Sequential glucosylation of the hydroxy fatty acid is probably catalyzed by the glycosyltransferase ugt1. The cellobiose lipid is further decorated by acetylation of the proximal glucose residue and by acylation with a short-chain beta-hydroxy fatty acid at the distal glucose residue. The acyltransferase uat1 may be a good candidate for catalyzing either acetylation or acylation of the cellobiose lipid. The fatty acid synthase fas2 may be involved in synthesis of the carbon backbone of the short-chain beta-hydroxy fatty acid esterified to the cellobiose disaccharide. The secreted UA consists of a mixture of both alpha-hydroxylated and non-hydroxylated glycolipids; therefore, alpha-hydroxylation of the long-chain fatty, catalyzed by the fatty acid hydroxylase ahd1, occurs late in UA biosynthesis and may be the last step before secretion. The polypeptide is Acyltransferase uat1 (Mycosarcoma maydis (Corn smut fungus)).